Here is a 553-residue protein sequence, read N- to C-terminus: Putative transport protein ASA_0825 (553 aa).

The next 5 helical transmembrane spans lie at 4 to 24 (IALSISMLSLVAVLGLWLGNW), 29 to 49 (VGLGIGGVLFGGIIVGHFAGV), 65 to 85 (FGLILFVYTIGIQVGPGFFSS), 95 to 115 (GFAALLVILGCVVAAGLHQLF), and 158 to 178 (MGYAVAYPFGICGILLTMWLV). 2 consecutive RCK C-terminal domains span residues 191–276 (DLFE…VLGE) and 279–361 (ETSL…VVGN). 6 helical membrane-spanning segments follow: residues 371–391 (MLPVFIGIGLGVLLGSIPFYL), 403–425 (AGGPLVVALILSRIGSIGKLYWF), 439–459 (IVLFLAVVGFKSGAGFVDTLI), 465–485 (AWMMYGMAITLIPLLVVGVLA), 493–513 (YLTLCGLLAGSMTDPPALAFA), and 533–553 (LVMFLRIISPQLLAILLWAGV).

It belongs to the AAE transporter (TC 2.A.81) family. YidE subfamily.

It localises to the cell membrane. This chain is Putative transport protein ASA_0825, found in Aeromonas salmonicida (strain A449).